The primary structure comprises 377 residues: UPF0754 membrane protein lin2327 (377 aa).

2 helical membrane passes run 1–21 and 357–377; these read MSVL…GAMT and YLGG…AMWI.

It belongs to the UPF0754 family.

It is found in the cell membrane. The protein is UPF0754 membrane protein lin2327 of Listeria innocua serovar 6a (strain ATCC BAA-680 / CLIP 11262).